A 69-amino-acid polypeptide reads, in one-letter code: Disintegrin VLO5B (69 aa).

One can recognise a Disintegrin domain in the interval 1 to 66 (MNSANPCCDP…DCPRNPWKSE (66 aa)). Disulfide bonds link C7–C30, C21–C27, C26–C51, and C39–C58. A Cell attachment site; atypical (MLD) motif is present at residues 43 to 45 (MLD).

This sequence belongs to the disintegrin family. Dimeric disintegrin subfamily. In terms of assembly, heterodimer with VLO5A; disulfide-linked. In terms of tissue distribution, expressed by the venom gland.

It is found in the secreted. In terms of biological role, poor inhibitor of platelet aggregation. The disintegrin inhibits the adhesion of the alpha-4/beta-1 (ITGA4/ITGB1) integrin to VCAM-1. Inhibition on alpha-2b/beta-3 (ITGA2B/ITGB3) is low. The sequence is that of Disintegrin VLO5B from Macrovipera lebetina obtusa (Levant blunt-nosed viper).